The primary structure comprises 152 residues: Calmodulin-like protein 2 (152 aa).

4 consecutive EF-hand domains span residues 1-36 (MDRG…VGIM), 37-72 (VPEN…MVEE), 74-109 (EEEE…MGLK), and 112-147 (RTLE…GGFA). Aspartate 14, asparagine 16, aspartate 18, lysine 20, glutamate 25, aspartate 50, asparagine 52, aspartate 54, glutamate 61, aspartate 87, asparagine 89, aspartate 91, glutamate 98, aspartate 125, aspartate 127, aspartate 129, methionine 131, and glutamate 136 together coordinate Ca(2+).

Belongs to the calmodulin family.

Its function is as follows. Potential calcium sensor that is required for pollen tube attraction for ovule fertilization. The chain is Calmodulin-like protein 2 (CML2) from Arabidopsis thaliana (Mouse-ear cress).